Consider the following 380-residue polypeptide: uncharacterized protein (380 aa).

Helical transmembrane passes span 15–35 (LFHP…LAFP), 45–65 (LFKI…PFIF), 75–95 (ILYL…FKIT), 98–118 (LFLS…FVKF), 123–143 (IFVD…VLIY), 182–202 (IIAF…MLFI), 217–237 (MVLL…IILL), 303–323 (GTIY…LGVI), and 341–361 (LLLA…LSLL).

The protein localises to the cell membrane. This is an uncharacterized protein from Methanocaldococcus jannaschii (strain ATCC 43067 / DSM 2661 / JAL-1 / JCM 10045 / NBRC 100440) (Methanococcus jannaschii).